The following is a 338-amino-acid chain: Nuclear hormone receptor family member nhr-108 (338 aa).

Positions 7-82 form a DNA-binding region, nuclear receptor; that stretch reads NQPCMVCGEI…IGMLEKVVAS (76 aa). The NR C4-type zinc-finger motif lies at 10–30; it reads CMVCGEISYSIRFGAVSCRAC. Residues 46 to 65 form an NR C4-type; degenerate zinc finger; that stretch reads KRCNGACDLGKYHRKTCQSC. Residues 92 to 338 enclose the NR LBD domain; the sequence is NNQTILSGLE…QCPLYEATNE (247 aa).

This sequence belongs to the nuclear hormone receptor family.

Its subcellular location is the nucleus. In terms of biological role, orphan nuclear receptor. This is Nuclear hormone receptor family member nhr-108 (nhr-108) from Caenorhabditis elegans.